A 340-amino-acid polypeptide reads, in one-letter code: NAD-dependent epimerase/dehydratase terH (340 aa).

Residues 7-27 (IVPPGGLVLVTGVTGFIGSYI) traverse the membrane as a helical segment. Asparagine 139 carries an N-linked (GlcNAc...) asparagine glycan. Tyrosine 176 provides a ligand contact to NADP(+).

It belongs to the NAD(P)-dependent epimerase/dehydratase family. Dihydroflavonol-4-reductase subfamily.

The protein localises to the membrane. Functionally, NAD-dependent epimerase/dehydratase; part of the gene cluster that mediates the biosynthesis of terrein, a fungal metabolite with ecological, antimicrobial, antiproliferative, and antioxidative activities. The first step in the pathway is performed by the polyketide synthase terA that produces 4-hydroxy-6-methylpyranon (4-HMP), orsellinic acid (OA), and 2,3-dehydro-6-hydroxymellein (2,3-dehydro-6-HM) by condensing acetyl-CoA with two, three, or four malonyl-CoA units, respectively. 4-HMP and OA are not pathway intermediates, but are rather shunt or side products. 2,3-dehydro-6-HM is further converted to 6-hydroxymellein (6-HM) by the 6-hydroxymellein synthase terB. The monooxygenases terC and terD, the multicopper oxidase terE and the Kelch-like protein terF are then involved in the transformation of 6-HM to terrein. Even if they are co-regulated with the other terrein cluster genes, terH and terI seem to be dispensable for terrein production; whereas one or both of the 2 transporters terG and terJ are probably required for efficient secretion of metabolites. This chain is NAD-dependent epimerase/dehydratase terH, found in Aspergillus terreus (strain NIH 2624 / FGSC A1156).